Consider the following 398-residue polypeptide: Ribosomal RNA large subunit methyltransferase I (398 aa).

Residues S2 to F79 enclose the PUA domain.

Belongs to the methyltransferase superfamily. RlmI family.

It is found in the cytoplasm. The catalysed reaction is cytidine(1962) in 23S rRNA + S-adenosyl-L-methionine = 5-methylcytidine(1962) in 23S rRNA + S-adenosyl-L-homocysteine + H(+). Its function is as follows. Specifically methylates the cytosine at position 1962 (m5C1962) of 23S rRNA. The chain is Ribosomal RNA large subunit methyltransferase I from Shigella dysenteriae serotype 1 (strain Sd197).